We begin with the raw amino-acid sequence, 1274 residues long: VWFA and cache domain-containing protein 1 (1274 aa).

Positions 1–35 (MARQPEEEETAVARARRPPLWLLCLVACWLLGAGA) are cleaved as a signal peptide. The Extracellular segment spans residues 36–1095 (EADFSILDEA…ITLNMIKSAP (1060 aa)). Residue asparagine 145 is glycosylated (N-linked (GlcNAc...) asparagine). Positions 228 to 443 (HIVVILDHGA…TTVGRFYTNL (216 aa)) constitute a VWFA domain. Cache domains lie at 453–532 (FSLP…SEPP) and 772–853 (LTGP…HPTL). A helical transmembrane segment spans residues 1096 to 1116 (VGPVAGGIMGCIMVLVLAVYA). The Cytoplasmic portion of the chain corresponds to 1117 to 1274 (YRHQIHRRSH…VTVHTVDAEC (158 aa)). Positions 1179–1227 (PERRRRYWGRSGTESDHGYSTMSPQEDSENPPCNNDPLSAGVDVGNHDE) are disordered. Residues 1196 to 1215 (GYSTMSPQEDSENPPCNNDP) show a composition bias toward polar residues.

Belongs to the calcium channel subunit alpha-2/delta family.

The protein resides in the membrane. Functionally, may regulate voltage-dependent calcium channels. The chain is VWFA and cache domain-containing protein 1 (CACHD1) from Homo sapiens (Human).